The following is a 653-amino-acid chain: Biotin biosynthesis bifunctional protein BioWF (653 aa).

Residue R278 participates in substrate binding. Position 365 to 366 (365 to 366) interacts with pyridoxal 5'-phosphate; it reads GY. Residue H390 coordinates substrate. Pyridoxal 5'-phosphate contacts are provided by residues S436, 461–464, and 492–495; these read DDAH and TASK. N6-(pyridoxal phosphate)lysine is present on K495.

In the N-terminal section; belongs to the BioW family. It in the C-terminal section; belongs to the class-II pyridoxal-phosphate-dependent aminotransferase family. BioF subfamily. Homodimer. Requires Mg(2+) as cofactor. Pyridoxal 5'-phosphate is required as a cofactor.

The catalysed reaction is heptanedioate + ATP + CoA = 6-carboxyhexanoyl-CoA + AMP + diphosphate. It catalyses the reaction 6-carboxyhexanoyl-[ACP] + L-alanine + H(+) = (8S)-8-amino-7-oxononanoate + holo-[ACP] + CO2. It functions in the pathway metabolic intermediate metabolism; pimeloyl-CoA biosynthesis; pimeloyl-CoA from pimelate: step 1/1. It participates in cofactor biosynthesis; biotin biosynthesis. Its function is as follows. Catalyzes both the decarboxylative condensation of pimeloyl-[acyl-carrier protein] and L-alanine to produce 8-amino-7-oxononanoate (AON), [acyl-carrier protein], and carbon dioxide, and the transformation of pimelate into pimeloyl-CoA with concomitant hydrolysis of ATP to AMP. This chain is Biotin biosynthesis bifunctional protein BioWF, found in Cutibacterium acnes (strain DSM 16379 / KPA171202) (Propionibacterium acnes).